The primary structure comprises 318 residues: Dual specificity protein phosphatase 2 (318 aa).

The Rhodanese domain maps to 27 to 148 (EAERTLLLDC…FQTYCPDLCS (122 aa)). The 142-residue stretch at 176 to 317 (GPVEILPYLY…LLQLETQVLC (142 aa)) folds into the Tyrosine-protein phosphatase domain. Catalysis depends on Cys261, which acts as the Phosphocysteine intermediate.

The protein belongs to the protein-tyrosine phosphatase family. Non-receptor class dual specificity subfamily. Interacts with MAPK14; this interaction does not lead to catalytic activation of DUSP2 and dephosphrylation of MAPK14. As to expression, in hematopoietic tissues such as spleen and thymus.

The protein resides in the nucleus. It catalyses the reaction O-phospho-L-tyrosyl-[protein] + H2O = L-tyrosyl-[protein] + phosphate. The catalysed reaction is O-phospho-L-threonyl-[protein] + H2O = L-threonyl-[protein] + phosphate. Dephosphorylates both phosphorylated Thr and Tyr residues in MAPK1, and dephosphorylation of phosphotyrosine is slightly faster than that of phosphothreonine. Can dephosphorylate MAPK1. This Mus musculus (Mouse) protein is Dual specificity protein phosphatase 2.